Consider the following 480-residue polypeptide: Ribosomal RNA small subunit methyltransferase F (480 aa).

Residues 125–131, Glu149, Asp176, and Asp194 each bind S-adenosyl-L-methionine; that span reads AAAPGSK. The active-site Nucleophile is Cys247.

The protein belongs to the class I-like SAM-binding methyltransferase superfamily. RsmB/NOP family.

It is found in the cytoplasm. The catalysed reaction is cytidine(1407) in 16S rRNA + S-adenosyl-L-methionine = 5-methylcytidine(1407) in 16S rRNA + S-adenosyl-L-homocysteine + H(+). Functionally, specifically methylates the cytosine at position 1407 (m5C1407) of 16S rRNA. This Enterobacter sp. (strain 638) protein is Ribosomal RNA small subunit methyltransferase F.